Reading from the N-terminus, the 753-residue chain is Serine/threonine-protein phosphatase with EF-hands 2 (753 aa).

One can recognise an IQ domain in the interval 21–46 (KAAALIQRWYRRYVARLEMRRRCTWS). Positions 128–540 (ATALVEAFRL…PHIVQYQANK (413 aa)) are catalytic. 4 residues coordinate Mn(2+): Asp-179, His-181, Asp-208, and Asn-240. The active-site Proton donor is the His-241. His-292 lines the Mn(2+) pocket. Disordered regions lie at residues 318-382 (CKTR…GSLD) and 409-435 (VTGE…KPTQ). Over residues 322–333 (QKSEKQMEEKRR) the composition is skewed to basic and acidic residues. The segment covering 348–361 (LPESRSLPSSPLRL) has biased composition (low complexity). The segment covering 366–377 (AQKTSRSSSIPC) has biased composition (polar residues). A Mn(2+)-binding site is contributed by His-488. EF-hand domains lie at 568 to 603 (AHSS…VLHL), 652 to 687 (RNRS…FSSH), and 692 to 727 (ITDD…VEKS). Ca(2+) contacts are provided by Asp-665, Asp-667, Ser-669, Glu-676, Asp-705, Asn-707, Asp-709, His-711, and Glu-716. Residues 732 to 753 (DASECPQATNAKDSGCSSPGAH) are disordered. A compositionally biased stretch (polar residues) spans 737–753 (PQATNAKDSGCSSPGAH).

It belongs to the PPP phosphatase family. It depends on Mn(2+) as a cofactor. Retinal specific.

It localises to the cytoplasm. Its subcellular location is the cell projection. The protein localises to the cilium. The protein resides in the photoreceptor outer segment. It is found in the photoreceptor inner segment. It carries out the reaction O-phospho-L-seryl-[protein] + H2O = L-seryl-[protein] + phosphate. It catalyses the reaction O-phospho-L-threonyl-[protein] + H2O = L-threonyl-[protein] + phosphate. With respect to regulation, activated by calcium. In terms of biological role, may play a role in phototransduction. May dephosphorylate photoactivated rhodopsin. May function as a calcium sensing regulator of ionic currents, energy production or synaptic transmission. This chain is Serine/threonine-protein phosphatase with EF-hands 2 (PPEF2), found in Homo sapiens (Human).